The following is a 457-amino-acid chain: MFKTLYARIAIYSITVILFSALISFVLTNVYYHYNLKASNDAKIMKTLKEARQYEQSAKPTHIQQYFKHLGQMNYQIMTIDQKGHKTFYGEPFREDTLSQNAINNVLNNQDYHGIKDKPFALFVTGFFDNVTDNTVGINFKTKDGSIAVFMRPDIGETFSEFRTFLAVLLMLLLFISISLVIASTYSIIRPVKKLKLATERLIDGDFETPIKQTRKDEIGTLQYHFNKMRESLGQVDQMRQHFVQNVSHEIKTPLTHIHHLLSELQQTSDKTLRQQYINDIYTITTQLSGLTTELLLLSELDNHQHLLFDDKIQVNQLIKDIIRHEQFAADEKSLIILADLESINFLGNQRLLHQALSNLLINAIKYTDVGGAIDIALQHSHNNIIFTISNDGSPISPQAEARLFERFYKVSKHDNSNGLGLAITKSIIELHHGTIQFTQSNEYVTTFTITLPNNSL.

A run of 2 helical transmembrane segments spans residues 9–29 and 164–184; these read IAIY…VLTN and TFLA…VIAS. An HAMP domain is found at 186-238; sequence YSIIRPVKKLKLATERLIDGDFETPIKQTRKDEIGTLQYHFNKMRESLGQVDQ. The 211-residue stretch at 246–456 folds into the Histidine kinase domain; that stretch reads NVSHEIKTPL…TFTITLPNNS (211 aa). Residue histidine 249 is modified to Phosphohistidine; by autocatalysis.

Autophosphorylated.

Its subcellular location is the cell membrane. The enzyme catalyses ATP + protein L-histidine = ADP + protein N-phospho-L-histidine.. Member of the two-component regulatory system HssS/HssR involved in intracellular heme homeostasis and tempering of staphylococcal virulence. HssS functions as a heme sensor histidine kinase which is autophosphorylated at a histidine residue and transfers its phosphate group to an aspartate residue of HssR. HssR/HssS activates the expression of hrtAB, an efflux pump, in response to extracellular heme, hemin, hemoglobin or blood. The chain is Heme sensor protein HssS (hssS) from Staphylococcus aureus (strain USA300).